The primary structure comprises 716 residues: Mitochondrial Rho GTPase 1 (716 aa).

At 1–692 the chain is on the cytoplasmic side; sequence MSPDAIRVVV…VSVDQDDIKH (692 aa). A Miro 1 domain is found at 3–224; sequence PDAIRVVVCG…FYLCQRAVTH (222 aa). Positions 58-99 are disordered; the sequence is NDQDHHHHHQSSPSTMKNKRKHNNKRERERERESSINNVQPN. Residues 84–91, 113–115, and 167–170 contribute to the GTP site; these read ERERERES, DTS, and NKSD. Residues 240–275 enclose the EF-hand 1 domain; it reads GAIKPLKRIFWLSDTDQDGYLNFEELSELHKKCFGI. Ca(2+)-binding residues include Asp-253, Asp-255, Asp-257, Tyr-259, and Glu-264. The segment at 303-327 is disordered; it reads TQTPPQQQHLATSAGTPNGTTTTTS. Residues 388–423 form the EF-hand 2 domain; the sequence is TGYKFFVDLFIKFDKDNDGGLNEDELNTLFRSTPGI. Ca(2+) contacts are provided by Asp-401, Asp-403, Asp-405, and Glu-412. The region spanning 505-671 is the Miro 2 domain; sequence RNVFNCFIVG…FIQLVDAAKT (167 aa). Residues 514–521, 550–554, and 620–623 contribute to the GTP site; these read GAPKAGKS, ELRGG, and LKAD. The chain crosses the membrane as a helical; Anchor for type IV membrane protein span at residues 693 to 713; sequence IIMTGAAIAVVGLVSIWVLNS. Residues 714–716 lie on the Mitochondrial intermembrane side of the membrane; sequence LRR.

The protein belongs to the mitochondrial Rho GTPase family.

It is found in the mitochondrion outer membrane. In terms of biological role, mitochondrial GTPase involved in mitochondrial trafficking. Probably involved in control of anterograde transport of mitochondria and their subcellular distribution. This is Mitochondrial Rho GTPase 1 (GEM1) from Candida albicans (strain SC5314 / ATCC MYA-2876) (Yeast).